The following is a 409-amino-acid chain: Isocitrate dehydrogenase [NADP] 1 (409 aa).

The NADP(+) site is built by Lys75, Thr78, Thr80, and Arg85. Asp255, Asp278, and Asp282 together coordinate Mn(2+). Gly313, Thr314, Val315, His318, and Asn331 together coordinate NADP(+).

It belongs to the isocitrate and isopropylmalate dehydrogenases family. Homodimer. Mg(2+) is required as a cofactor. Requires Mn(2+) as cofactor.

The catalysed reaction is D-threo-isocitrate + NADP(+) = 2-oxoglutarate + CO2 + NADPH. Catalyzes the oxidative decarboxylation of isocitrate to 2-oxoglutarate and carbon dioxide with the concomitant reduction of NADP(+). The chain is Isocitrate dehydrogenase [NADP] 1 (icd) from Mycobacterium bovis (strain ATCC BAA-935 / AF2122/97).